The sequence spans 126 residues: Desulfoferrodoxin (126 aa).

9 residues coordinate Fe cation: Cys10, Cys13, Cys29, Cys30, His49, His69, His75, Cys116, and His119.

Belongs to the desulfoferrodoxin family. Homodimer. Fe(3+) serves as cofactor. It depends on Cu(2+) as a cofactor.

It catalyses the reaction reduced [rubredoxin] + superoxide + 2 H(+) = oxidized [rubredoxin] + H2O2. Functionally, catalyzes the one-electron reduction of superoxide anion radical to hydrogen peroxide at a nonheme ferrous iron center. Plays a fundamental role in case of oxidative stress via its superoxide detoxification activity. The sequence is that of Desulfoferrodoxin (dfx) from Syntrophotalea carbinolica (strain DSM 2380 / NBRC 103641 / GraBd1) (Pelobacter carbinolicus).